Consider the following 104-residue polypeptide: Cell division topological specificity factor (104 aa).

This sequence belongs to the MinE family.

In terms of biological role, prevents the cell division inhibition by proteins MinC and MinD at internal division sites while permitting inhibition at polar sites. This ensures cell division at the proper site by restricting the formation of a division septum at the midpoint of the long axis of the cell. In Sorangium cellulosum (strain So ce56) (Polyangium cellulosum (strain So ce56)), this protein is Cell division topological specificity factor.